A 197-amino-acid polypeptide reads, in one-letter code: Large ribosomal subunit protein uL22 (197 aa).

The tract at residues 118–197 (ESRPAKDQRS…ETSAAKGGSD (80 aa)) is disordered. The segment covering 149–165 (APAKKAAAKAPAKKAPA) has biased composition (low complexity). Positions 172 to 183 (TPAKKAPAKKAP) are enriched in basic residues. The segment covering 184–197 (AKASETSAAKGGSD) has biased composition (low complexity).

Belongs to the universal ribosomal protein uL22 family. In terms of assembly, part of the 50S ribosomal subunit.

Functionally, this protein binds specifically to 23S rRNA; its binding is stimulated by other ribosomal proteins, e.g. L4, L17, and L20. It is important during the early stages of 50S assembly. It makes multiple contacts with different domains of the 23S rRNA in the assembled 50S subunit and ribosome. Its function is as follows. The globular domain of the protein is located near the polypeptide exit tunnel on the outside of the subunit, while an extended beta-hairpin is found that lines the wall of the exit tunnel in the center of the 70S ribosome. In Mycobacterium bovis (strain ATCC BAA-935 / AF2122/97), this protein is Large ribosomal subunit protein uL22.